Here is a 258-residue protein sequence, read N- to C-terminus: Homeobox protein VENTX (258 aa).

The segment covering 1–32 (MRLSSSPPRGPQQLSSFGSVDWLSQSSCSGPT) has biased composition (polar residues). Disordered stretches follow at residues 1-93 (MRLS…RAPR) and 227-248 (SHPP…PRGL). The homeobox DNA-binding region spans 91–150 (APRVRTAFTMEQVRTLEGVFQHHQYLSPLERKRLAREMQLSEVQIKTWFQNRRMKHKRQM).

Expressed in bone marrow of patients recovering from chemotherapy. Also expressed in an erythroleukemia cell line.

The protein localises to the nucleus. Functionally, may be involved in ventralization. This is Homeobox protein VENTX (VENTX) from Homo sapiens (Human).